The chain runs to 310 residues: Porphobilinogen deaminase (310 aa).

Residue cysteine 241 is modified to S-(dipyrrolylmethanemethyl)cysteine.

The protein belongs to the HMBS family. As to quaternary structure, monomer. Dipyrromethane is required as a cofactor.

The catalysed reaction is 4 porphobilinogen + H2O = hydroxymethylbilane + 4 NH4(+). It functions in the pathway porphyrin-containing compound metabolism; protoporphyrin-IX biosynthesis; coproporphyrinogen-III from 5-aminolevulinate: step 2/4. Tetrapolymerization of the monopyrrole PBG into the hydroxymethylbilane pre-uroporphyrinogen in several discrete steps. In Pelobacter propionicus (strain DSM 2379 / NBRC 103807 / OttBd1), this protein is Porphobilinogen deaminase.